A 278-amino-acid chain; its full sequence is uncharacterized protein (278 aa).

Positions 127–151 are enriched in pro residues; it reads PPTPSPPPPPAPTQPTRPTPGPAFF. Residues 127–174 are disordered; sequence PPTPSPPPPPAPTQPTRPTPGPAFFPQPFKVELHHPTPKTSSLPAPSL. Residues 164–174 show a composition bias toward low complexity; the sequence is PKTSSLPAPSL.

This is an uncharacterized protein from Botryotinia fuckeliana (Noble rot fungus).